Here is a 229-residue protein sequence, read N- to C-terminus: All-trans retinoic acid-induced differentiation factor (229 aa).

The first 30 residues, 1–30 (MAPHDPGSLTTLVPWAAALLLALGVERALA), serve as a signal peptide directing secretion. Over 31–199 (LPEICTQCPG…YKCMRQGSFS (169 aa)) the chain is Extracellular. N-linked (GlcNAc...) asparagine glycosylation is found at N44, N79, N157, and N168. In terms of domain architecture, EGF-like spans 152-193 (QKNLCNNTGDPEMCPENGSCVPDGPGLLQCVCADGFHGYKCM). Cystine bridges form between C156–C171, C165–C181, and C183–C192. The helical transmembrane segment at 200 to 220 (LLMFFGILGATTLSVSILLWA) threads the bilayer. Topologically, residues 221–229 (TQRRKAKTS) are cytoplasmic.

As to quaternary structure, interacts with NELL1; the interaction promotes osteoblastic differentiation and mineralization. Interacts with SLC37A3; the interaction is direct and both proteins are mutually dependent for their stability. Weakly expressed in hematopoietic cell lines.

The protein resides in the nucleus envelope. Its subcellular location is the cell membrane. It localises to the lysosome membrane. Its function is as follows. Promotes osteoblast cell differentiation and terminal mineralization. Plays a role in inducing the cell cycle arrest via inhibiting CCND1 expression in all-trans-retinoic acid (ATRA) signal pathway. In osteoclasts, forms a transporter complex with ATRAID for nitrogen-containing-bisphophonates (N-BPs) required for releasing N-BP molecules that have trafficked to lysosomes through fluid-phase endocytosis into the cytosol. This is All-trans retinoic acid-induced differentiation factor from Homo sapiens (Human).